We begin with the raw amino-acid sequence, 472 residues long: GTPase HflX (472 aa).

Positions M1 to A21 are disordered. One can recognise a Hflx-type G domain in the interval P230–S396. GTP-binding positions include G236–S243, F261–D265, D283–G286, N349–D352, and S374–K376. Mg(2+) contacts are provided by S243 and T263.

This sequence belongs to the TRAFAC class OBG-HflX-like GTPase superfamily. HflX GTPase family. In terms of assembly, monomer. Associates with the 50S ribosomal subunit. Mg(2+) serves as cofactor.

The protein localises to the cytoplasm. Its function is as follows. GTPase that associates with the 50S ribosomal subunit and may have a role during protein synthesis or ribosome biogenesis. Specific for GTP. This Chlamydia pneumoniae (Chlamydophila pneumoniae) protein is GTPase HflX.